A 158-amino-acid chain; its full sequence is Endoribonuclease YbeY (158 aa).

The Zn(2+) site is built by H122, H126, and H132.

The protein belongs to the endoribonuclease YbeY family. Requires Zn(2+) as cofactor.

It localises to the cytoplasm. Its function is as follows. Single strand-specific metallo-endoribonuclease involved in late-stage 70S ribosome quality control and in maturation of the 3' terminus of the 16S rRNA. The sequence is that of Endoribonuclease YbeY from Bacillus licheniformis (strain ATCC 14580 / DSM 13 / JCM 2505 / CCUG 7422 / NBRC 12200 / NCIMB 9375 / NCTC 10341 / NRRL NRS-1264 / Gibson 46).